We begin with the raw amino-acid sequence, 647 residues long: Golgi-associated RAB2B interactor protein 3 (647 aa).

A compositionally biased stretch (polar residues) spans 188–202 (IPTADTSTETKSTLV). Disordered stretches follow at residues 188-220 (IPTA…TSQD), 267-296 (TAGA…GSAR), 361-384 (SKSP…QERS), and 465-573 (RDGS…GFVS). A compositionally biased stretch (basic and acidic residues) spans 205–214 (IHGEGDRDSK). Residues 361-378 (SKSPGSGQVATGLTGTAS) are compositionally biased toward polar residues. Position 378 is a phosphoserine (Ser-378). The span at 478–491 (TQKEKRERRESDRK) shows a compositional bias: basic and acidic residues. The segment covering 492–501 (GSRKSSHHQR) has biased composition (basic residues). Residues 494–511 (RKSSHHQRTGASRHSSSK) carry the Bipartite nuclear localization signal motif. The span at 528–556 (KTREDKKEKGRGSLRDQRHSSSYRSESRT) shows a compositional bias: basic and acidic residues. Residues Ser-634 and Ser-636 each carry the phosphoserine modification.

The protein belongs to the GARIN family. In terms of assembly, interacts (via N-terminus) with RAB2B (in GTP-bound form). Interacts with FRG1.

The protein localises to the golgi apparatus. It localises to the nucleus. It is found in the cajal body. May be involved in RNA biogenesis. This is Golgi-associated RAB2B interactor protein 3 (Garin3) from Rattus norvegicus (Rat).